We begin with the raw amino-acid sequence, 97 residues long: Large ribosomal subunit protein eL21 (97 aa).

It belongs to the eukaryotic ribosomal protein eL21 family.

In Methanoculleus marisnigri (strain ATCC 35101 / DSM 1498 / JR1), this protein is Large ribosomal subunit protein eL21.